The following is a 286-amino-acid chain: NADPH-dependent 7-cyano-7-deazaguanine reductase (286 aa).

88–90 (VES) serves as a coordination point for substrate. Position 90–91 (90–91 (SK)) interacts with NADPH. Cys194 acts as the Thioimide intermediate in catalysis. The active-site Proton donor is the Asp201. 233-234 (HE) provides a ligand contact to substrate. 262–263 (RG) provides a ligand contact to NADPH.

Belongs to the GTP cyclohydrolase I family. QueF type 2 subfamily. In terms of assembly, homodimer.

It localises to the cytoplasm. The enzyme catalyses 7-aminomethyl-7-carbaguanine + 2 NADP(+) = 7-cyano-7-deazaguanine + 2 NADPH + 3 H(+). Its pathway is tRNA modification; tRNA-queuosine biosynthesis. In terms of biological role, catalyzes the NADPH-dependent reduction of 7-cyano-7-deazaguanine (preQ0) to 7-aminomethyl-7-deazaguanine (preQ1). The sequence is that of NADPH-dependent 7-cyano-7-deazaguanine reductase from Colwellia psychrerythraea (strain 34H / ATCC BAA-681) (Vibrio psychroerythus).